The chain runs to 131 residues: C-type natriuretic peptide 1 (131 aa).

The N-terminal stretch at 1-22 (MLCPVLLCATLLLLTPFEVTEA) is a signal peptide. A propeptide spanning residues 23–109 (RALHPSADAV…KRAEPDRSRR (87 aa)) is cleaved from the precursor. Cysteines 115 and 131 form a disulfide.

This sequence belongs to the natriuretic peptide family. In terms of tissue distribution, brain and spinal cord.

The protein resides in the secreted. Functionally, exhibits natriuretic and vasodepressant activity. Has cGMP-stimulating activity. May help to regulate body fluid homeostasis in a variety of aquatic environments. This Oryzias latipes (Japanese rice fish) protein is C-type natriuretic peptide 1.